Here is a 480-residue protein sequence, read N- to C-terminus: Cytochrome c oxidase subunit 1 (480 aa).

A helical membrane pass occupies residues 22-42 (ISYLWLAYWFGMIGFYMSVLI). Residues E45 and G50 each contribute to the Ca(2+) site. 8 helical membrane passes run 64-84 (LLFT…GLFG), 109-129 (SLLL…LEIG), 151-171 (LIIF…INFI), 194-214 (IVLT…VFLM), 240-260 (LFWF…FGII), 278-298 (MILA…HHMY), 309-329 (YFTT…FNWV), and 343-363 (LILF…TGVV). H69 is a Fe(II)-heme a binding site. Position 246 (H246) interacts with Cu cation. The 1'-histidyl-3'-tyrosine (His-Tyr) cross-link spans 246 to 250 (HPEVY). Residue Y250 coordinates O2. Cu cation-binding residues include H295 and H296. Residues H374 and D375 each coordinate Mg(2+). Residue H382 coordinates heme a3. 2 consecutive transmembrane segments (helical) span residues 382-402 (HFHF…IVYI) and 416-436 (LSLM…PMHF). H384 provides a ligand contact to Fe(II)-heme a. P447 is a binding site for Ca(2+). A helical transmembrane segment spans residues 458–478 (FICTLGATMMLVLKLTVLFII).

This sequence belongs to the heme-copper respiratory oxidase family. As to quaternary structure, component of the cytochrome c oxidase (complex IV, CIV), a multisubunit enzyme composed of a catalytic core of 3 subunits and several supernumerary subunits. The complex exists as a monomer or a dimer and forms supercomplexes (SCs) in the inner mitochondrial membrane with ubiquinol-cytochrome c oxidoreductase (cytochrome b-c1 complex, complex III, CIII). Heme serves as cofactor. The cofactor is Cu cation.

Its subcellular location is the mitochondrion inner membrane. The catalysed reaction is 4 Fe(II)-[cytochrome c] + O2 + 8 H(+)(in) = 4 Fe(III)-[cytochrome c] + 2 H2O + 4 H(+)(out). Its pathway is energy metabolism; oxidative phosphorylation. Functionally, component of the cytochrome c oxidase, the last enzyme in the mitochondrial electron transport chain which drives oxidative phosphorylation. The respiratory chain contains 3 multisubunit complexes succinate dehydrogenase (complex II, CII), ubiquinol-cytochrome c oxidoreductase (cytochrome b-c1 complex, complex III, CIII) and cytochrome c oxidase (complex IV, CIV), that cooperate to transfer electrons derived from NADH and succinate to molecular oxygen, creating an electrochemical gradient over the inner membrane that drives transmembrane transport and the ATP synthase. Cytochrome c oxidase is the component of the respiratory chain that catalyzes the reduction of oxygen to water. Electrons originating from reduced cytochrome c in the intermembrane space (IMS) are transferred via the dinuclear copper A center (CU(A)) of subunit 2 and heme A of subunit 1 to the active site in subunit 1, a binuclear center (BNC) formed by heme A3 and copper B (CU(B)). The BNC reduces molecular oxygen to 2 water molecules using 4 electrons from cytochrome c in the IMS and 4 protons from the mitochondrial matrix. The polypeptide is Cytochrome c oxidase subunit 1 (MT-CO1) (Theileria annulata).